A 208-amino-acid chain; its full sequence is Large ribosomal subunit protein uL3 (208 aa).

The interval 126 to 150 (NQSRGPMAHGSRYHRRPGSMGPVAP) is disordered.

It belongs to the universal ribosomal protein uL3 family. In terms of assembly, part of the 50S ribosomal subunit. Forms a cluster with proteins L14 and L19.

Its function is as follows. One of the primary rRNA binding proteins, it binds directly near the 3'-end of the 23S rRNA, where it nucleates assembly of the 50S subunit. The protein is Large ribosomal subunit protein uL3 of Exiguobacterium sibiricum (strain DSM 17290 / CCUG 55495 / CIP 109462 / JCM 13490 / 255-15).